Reading from the N-terminus, the 88-residue chain is Sec-independent protein translocase protein TatA (88 aa).

A helical membrane pass occupies residues 1–21; the sequence is MGGISITQLLIIASIVVVLFG. The disordered stretch occupies residues 39 to 88; that stretch reads FKKSMSEDDNTTSTSSDKSSQDADFTAPPIEPKANLACPDEAKNKDKEHV. Residues 49–62 are compositionally biased toward low complexity; the sequence is TTSTSSDKSSQDAD. The span at 78–88 shows a compositional bias: basic and acidic residues; that stretch reads DEAKNKDKEHV.

The protein belongs to the TatA/E family. As to quaternary structure, the Tat system comprises two distinct complexes: a TatABC complex, containing multiple copies of TatA, TatB and TatC subunits, and a separate TatA complex, containing only TatA subunits. Substrates initially bind to the TatABC complex, which probably triggers association of the separate TatA complex to form the active translocon.

The protein localises to the cell inner membrane. Its function is as follows. Part of the twin-arginine translocation (Tat) system that transports large folded proteins containing a characteristic twin-arginine motif in their signal peptide across membranes. TatA could form the protein-conducting channel of the Tat system. This Sodalis glossinidius (strain morsitans) protein is Sec-independent protein translocase protein TatA.